We begin with the raw amino-acid sequence, 215 residues long: Pyrrolidone-carboxylate peptidase (215 aa).

Catalysis depends on residues glutamate 80, cysteine 143, and histidine 167.

Belongs to the peptidase C15 family. In terms of assembly, homotetramer.

The protein localises to the cytoplasm. It carries out the reaction Release of an N-terminal pyroglutamyl group from a polypeptide, the second amino acid generally not being Pro.. Functionally, removes 5-oxoproline from various penultimate amino acid residues except L-proline. The polypeptide is Pyrrolidone-carboxylate peptidase (Bacillus cereus (strain ATCC 10987 / NRS 248)).